Here is a 337-residue protein sequence, read N- to C-terminus: Protein FAM169B (337 aa).

The interval 278–326 (STVHPKCSEEDTDTPGQASQEDGPTQFNHGESHKEWAVGEPERTQNGRR) is disordered. The span at 291–306 (TPGQASQEDGPTQFNH) shows a compositional bias: polar residues. A compositionally biased stretch (basic and acidic residues) spans 307-322 (GESHKEWAVGEPERTQ).

It belongs to the FAM169 family.

The sequence is that of Protein FAM169B (Fam169b) from Mus musculus (Mouse).